A 172-amino-acid polypeptide reads, in one-letter code: Lipoprotein signal peptidase (172 aa).

Helical transmembrane passes span 10-30 (LIWL…KAWV), 68-88 (WQLW…AFWL), and 98-118 (SALP…DRLM). Residues aspartate 124 and aspartate 142 contribute to the active site. A helical transmembrane segment spans residues 138 to 158 (FNIADSAIVGGAIGIAVFGLF).

Belongs to the peptidase A8 family.

The protein resides in the cell inner membrane. The catalysed reaction is Release of signal peptides from bacterial membrane prolipoproteins. Hydrolyzes -Xaa-Yaa-Zaa-|-(S,diacylglyceryl)Cys-, in which Xaa is hydrophobic (preferably Leu), and Yaa (Ala or Ser) and Zaa (Gly or Ala) have small, neutral side chains.. Its pathway is protein modification; lipoprotein biosynthesis (signal peptide cleavage). Its function is as follows. This protein specifically catalyzes the removal of signal peptides from prolipoproteins. The protein is Lipoprotein signal peptidase of Xanthomonas euvesicatoria pv. vesicatoria (strain 85-10) (Xanthomonas campestris pv. vesicatoria).